The chain runs to 422 residues: GTPase Obg (422 aa).

Positions 4 to 161 constitute an Obg domain; that stretch reads LHFVDEAFNE…FKIKTELKVL (158 aa). The OBG-type G domain occupies 162–327; that stretch reads ADIGLLGFPS…LKYEMSSLLQ (166 aa). GTP-binding positions include 168–175, 193–197, 214–217, 281–284, and 308–310; these read GFPSVGKS, FTTIK, DLPG, NKMD, and SLV. Residues Ser175 and Thr195 each coordinate Mg(2+). In terms of domain architecture, OCT spans 345 to 422; it reads TLPDNQNTIS…KICDRLFYFL (78 aa).

It belongs to the TRAFAC class OBG-HflX-like GTPase superfamily. OBG GTPase family. As to quaternary structure, monomer. Requires Mg(2+) as cofactor.

It localises to the cytoplasm. Functionally, an essential GTPase which binds GTP, GDP and possibly (p)ppGpp with moderate affinity, with high nucleotide exchange rates and a fairly low GTP hydrolysis rate. Plays a role in control of the cell cycle, stress response, ribosome biogenesis and in those bacteria that undergo differentiation, in morphogenesis control. This chain is GTPase Obg, found in Onion yellows phytoplasma (strain OY-M).